The chain runs to 138 residues: uncharacterized protein (138 aa).

The protein resides in the plastid. It is found in the chloroplast. This is an uncharacterized protein from Chlorella vulgaris (Green alga).